The sequence spans 923 residues: Probable ribosylation factor GTPase-activating protein cnt6 (923 aa).

The residue at position 207 (Ser207) is a Phosphoserine. A compositionally biased stretch (basic and acidic residues) spans 444–455 (TTRRDKGREMHR). The tract at residues 444–476 (TTRRDKGREMHRSQVIQTSGRPKSMAPPSPSPI) is disordered. Positions 526–632 (KIFKEGLLLV…WIEAICEAAK (107 aa)) constitute a PH domain. The Arf-GAP domain occupies 714-837 (NIFIQMLRKT…AFIDFAGVDA (124 aa)). The C4-type zinc finger occupies 730–754 (CADCGSVKDVTWCSINIPVVLCIEC).

The protein resides in the cytoplasm. It is found in the cell tip. Functionally, GTPase-activating protein for the ADP ribosylation factor family. The sequence is that of Probable ribosylation factor GTPase-activating protein cnt6 (cnt6) from Schizosaccharomyces pombe (strain 972 / ATCC 24843) (Fission yeast).